Here is a 556-residue protein sequence, read N- to C-terminus: Phenylalanine--tRNA ligase beta subunit (556 aa).

In terms of domain architecture, B5 spans 274-349 (HEPEEMEVDL…ITLGLNKIGY (76 aa)). Mg(2+) contacts are provided by aspartate 327, aspartate 333, glutamate 336, and glutamate 337.

Belongs to the phenylalanyl-tRNA synthetase beta subunit family. Type 2 subfamily. Tetramer of two alpha and two beta subunits. Requires Mg(2+) as cofactor.

Its subcellular location is the cytoplasm. The catalysed reaction is tRNA(Phe) + L-phenylalanine + ATP = L-phenylalanyl-tRNA(Phe) + AMP + diphosphate + H(+). In Korarchaeum cryptofilum (strain OPF8), this protein is Phenylalanine--tRNA ligase beta subunit.